The sequence spans 226 residues: Putative N-acetylmannosamine-6-phosphate 2-epimerase (226 aa).

The protein belongs to the NanE family.

The catalysed reaction is an N-acyl-D-glucosamine 6-phosphate = an N-acyl-D-mannosamine 6-phosphate. It participates in amino-sugar metabolism; N-acetylneuraminate degradation; D-fructose 6-phosphate from N-acetylneuraminate: step 3/5. In terms of biological role, converts N-acetylmannosamine-6-phosphate (ManNAc-6-P) to N-acetylglucosamine-6-phosphate (GlcNAc-6-P). In Mycoplasma capricolum subsp. capricolum (strain California kid / ATCC 27343 / NCTC 10154), this protein is Putative N-acetylmannosamine-6-phosphate 2-epimerase.